The following is a 368-amino-acid chain: Homoserine O-acetyltransferase (368 aa).

Positions 44-350 (NAILVAHAWT…AYGHDAFLLE (307 aa)) constitute an AB hydrolase-1 domain. Catalysis depends on serine 150, which acts as the Nucleophile. Arginine 217 is a substrate binding site. Catalysis depends on residues aspartate 311 and histidine 344. Aspartate 345 is a substrate binding site.

It belongs to the AB hydrolase superfamily. MetX family. Homodimer.

It is found in the cytoplasm. The catalysed reaction is L-homoserine + acetyl-CoA = O-acetyl-L-homoserine + CoA. The protein operates within amino-acid biosynthesis; L-methionine biosynthesis via de novo pathway; O-acetyl-L-homoserine from L-homoserine: step 1/1. Functionally, transfers an acetyl group from acetyl-CoA to L-homoserine, forming acetyl-L-homoserine. The chain is Homoserine O-acetyltransferase from Geobacter sulfurreducens (strain ATCC 51573 / DSM 12127 / PCA).